Reading from the N-terminus, the 426-residue chain is Glutamate-1-semialdehyde 2,1-aminomutase (426 aa).

K265 is subject to N6-(pyridoxal phosphate)lysine.

It belongs to the class-III pyridoxal-phosphate-dependent aminotransferase family. HemL subfamily. As to quaternary structure, homodimer. Pyridoxal 5'-phosphate is required as a cofactor.

Its subcellular location is the cytoplasm. It carries out the reaction (S)-4-amino-5-oxopentanoate = 5-aminolevulinate. It participates in porphyrin-containing compound metabolism; protoporphyrin-IX biosynthesis; 5-aminolevulinate from L-glutamyl-tRNA(Glu): step 2/2. The polypeptide is Glutamate-1-semialdehyde 2,1-aminomutase (Salmonella heidelberg (strain SL476)).